Consider the following 106-residue polypeptide: Testis-specific basic protein Y 2 (106 aa).

Belongs to the VCX/VCY family. Interacts with MAP1S. Interacts with UBE3A (via HECT domain). Expressed exclusively in testis. Expressed in ejaculated spermatozoa of germ cell. Expressed in the nuclei of spermatogonia, spermatocytes, and round spermatids, except elongated spermatids (at protein level).

The sequence is that of Testis-specific basic protein Y 2 (BPY2) from Homo sapiens (Human).